A 601-amino-acid polypeptide reads, in one-letter code: HIRA-interacting protein 3 (601 aa).

2 disordered regions span residues 60 to 469 and 546 to 601; these read KMQA…EDHP and STGR…GDSS. Residues 66–76 are compositionally biased toward basic and acidic residues; it reads GTREGKPDFIK. Phosphoserine occurs at positions 85, 96, and 98. The segment covering 97–113 has biased composition (low complexity); that stretch reads ESESSSSPSSPDGSGPS. Residues 117–129 show a composition bias toward basic residues; sequence RTTKKTCLRRALK. Residues 130 to 149 show a composition bias toward basic and acidic residues; it reads KAVESTDEDHQTDLDAKMGL. Ser-134 bears the Phosphoserine mark. A phosphothreonine mark is found at Thr-135 and Thr-141. Phosphoserine occurs at positions 152, 153, and 163. Residue Thr-167 is modified to Phosphothreonine. Residues 186–205 are compositionally biased toward basic and acidic residues; it reads GAKDKQVPLKADRKQVREES. Ser-205, Ser-207, Ser-208, Ser-231, Ser-234, Ser-238, Ser-313, Ser-359, Ser-360, Ser-384, and Ser-389 each carry phosphoserine. 2 stretches are compositionally biased toward basic and acidic residues: residues 238–264 and 313–324; these read SPAKKKELSEPRSRSNRAERTARERKS and SSEKGEAEKEEG. The segment covering 347-378 has biased composition (polar residues); it reads RTQTESGRRQNTSSRDDSNSTQEQAAAQGTTK. Low complexity predominate over residues 379 to 388; it reads SGSLGSSNGD. Thr-391 carries the phosphothreonine modification. Phosphoserine is present on residues Ser-396 and Ser-398. Residues 413–432 are compositionally biased toward low complexity; sequence SNKSSKNGQARSCSSSSDSS. The tract at residues 429–572 is interaction with the histone H2A-H2B complex; sequence SDSSPEPTGQ…TSPGETYRRT (144 aa). Residues 556–566 show a composition bias toward polar residues; the sequence is WNPSGEGTSPG. 5 positions are modified to phosphoserine: Ser-564, Ser-575, Ser-595, Ser-596, and Ser-600. The segment covering 568–580 has biased composition (basic and acidic residues); the sequence is TYRRTLDSEEEQP.

In terms of assembly, interacts (via C-terminus) with histone H2A-H2B dimers; the interaction is direct. Interacts with HIRA. Interacts with CK2. Phosphorylated by CK2.

The protein localises to the nucleus. Functionally, histone chaperone that carries a H2A-H2B histone complex and facilitates its deposition onto chromatin. The chain is HIRA-interacting protein 3 from Mus musculus (Mouse).